The chain runs to 430 residues: Enolase (430 aa).

Residue Gln-166 participates in (2R)-2-phosphoglycerate binding. Glu-208 (proton donor) is an active-site residue. Mg(2+) is bound by residues Asp-245, Glu-288, and Asp-315. (2R)-2-phosphoglycerate is bound by residues Lys-340, Arg-369, Ser-370, and Lys-391. Lys-340 (proton acceptor) is an active-site residue.

It belongs to the enolase family. Requires Mg(2+) as cofactor.

Its subcellular location is the cytoplasm. It localises to the secreted. The protein localises to the cell surface. The enzyme catalyses (2R)-2-phosphoglycerate = phosphoenolpyruvate + H2O. Its pathway is carbohydrate degradation; glycolysis; pyruvate from D-glyceraldehyde 3-phosphate: step 4/5. In terms of biological role, catalyzes the reversible conversion of 2-phosphoglycerate (2-PG) into phosphoenolpyruvate (PEP). It is essential for the degradation of carbohydrates via glycolysis. This is Enolase from Clostridium kluyveri (strain NBRC 12016).